The primary structure comprises 458 residues: Alpha-glucosides-binding periplasmic protein AglE (458 aa).

Residues 1-27 form the signal peptide; the sequence is MKRSLLIGVAAFALLAGTAGLAGTAGA.

It belongs to the bacterial solute-binding protein 1 family.

Its subcellular location is the periplasm. Part of the binding-protein-dependent transport system for alpha-glucosides such as sucrose, maltose and trehalose. This is Alpha-glucosides-binding periplasmic protein AglE (aglE) from Rhizobium meliloti (strain 1021) (Ensifer meliloti).